We begin with the raw amino-acid sequence, 182 residues long: NADH-quinone oxidoreductase subunit I (182 aa).

4Fe-4S ferredoxin-type domains follow at residues 52 to 82 and 92 to 121; these read LTRD…LQKA and EFFR…LTPD. Cys62, Cys65, Cys68, Cys72, Cys101, Cys104, Cys107, and Cys111 together coordinate [4Fe-4S] cluster.

The protein belongs to the complex I 23 kDa subunit family. NDH-1 is composed of 13 different subunits. Subunits NuoA, H, J, K, L, M, N constitute the membrane sector of the complex. The cofactor is [4Fe-4S] cluster.

The protein localises to the cell inner membrane. It carries out the reaction a quinone + NADH + 5 H(+)(in) = a quinol + NAD(+) + 4 H(+)(out). Its function is as follows. NDH-1 shuttles electrons from NADH, via FMN and iron-sulfur (Fe-S) centers, to quinones in the respiratory chain. The immediate electron acceptor for the enzyme in this species is believed to be ubiquinone. Couples the redox reaction to proton translocation (for every two electrons transferred, four hydrogen ions are translocated across the cytoplasmic membrane), and thus conserves the redox energy in a proton gradient. The chain is NADH-quinone oxidoreductase subunit I from Pseudomonas aeruginosa (strain LESB58).